The chain runs to 366 residues: Spore germination protein GerM (366 aa).

Disordered regions lie at residues T42 to Q72 and E346 to F366. Residues K58–K69 are compositionally biased toward basic and acidic residues. The span at R357–F366 shows a compositional bias: polar residues.

In terms of biological role, unknown. Affects both sporulation and germination. The polypeptide is Spore germination protein GerM (gerM) (Bacillus subtilis (strain 168)).